Consider the following 189-residue polypeptide: Probable thymidylate kinase 1 (189 aa).

9–16 contacts ATP; sequence GIDGSGKT.

The protein belongs to the thymidylate kinase family.

It catalyses the reaction dTMP + ATP = dTDP + ADP. The protein is Probable thymidylate kinase 1 (tmk1) of Saccharolobus solfataricus (strain ATCC 35092 / DSM 1617 / JCM 11322 / P2) (Sulfolobus solfataricus).